Here is a 356-residue protein sequence, read N- to C-terminus: Tyrosine recombinase XerS (356 aa).

The 106-residue stretch at 16-121 folds into the Core-binding (CB) domain; the sequence is LMPWFVLEYY…ALSSLYKYLT (106 aa). Residues 169 to 354 enclose the Tyr recombinase domain; the sequence is KFLDYVENEY…VNDEQKNALD (186 aa). Active-site residues include Arg-210, Lys-234, His-306, Arg-309, and His-332. Tyr-341 functions as the O-(3'-phospho-DNA)-tyrosine intermediate in the catalytic mechanism.

This sequence belongs to the 'phage' integrase family. XerS subfamily.

It localises to the cytoplasm. With respect to regulation, ftsK is required for recombination. In terms of biological role, site-specific tyrosine recombinase, which acts by catalyzing the cutting and rejoining of the recombining DNA molecules. Essential to convert dimers of the bacterial chromosome into monomers to permit their segregation at cell division. This is Tyrosine recombinase XerS from Streptococcus thermophilus (strain CNRZ 1066).